The sequence spans 2175 residues: Homeobox protein cut (2175 aa).

Disordered stretches follow at residues 139–170 and 249–432; these read NLLANTNTPSPSPPLLSAEQQQQLQSSLQQSG and GNVK…GQPA. Low complexity-rich tracts occupy residues 153-169 and 249-268; these read LLSAEQQQQLQSSLQQS and GNVKSGSTTSNANHTNSNNS. Residues 265–343 adopt a coiled-coil conformation; that stretch reads SNNSHQDEEE…ENKDAGEASL (79 aa). The span at 271–294 shows a compositional bias: acidic residues; the sequence is DEEELDDEEEDEEEDEDEDDEEEN. The span at 309–320 shows a compositional bias: polar residues; it reads QQETRTEPSATT. The span at 344–359 shows a compositional bias: low complexity; it reads NVSNNHNTTDSNNSCS. Residues 360 to 374 are compositionally biased toward polar residues; sequence RKNNNGGNESEQHVA. A compositionally biased stretch (low complexity) spans 384 to 415; the sequence is NNNTNTSNNNNTSNTATSNTNNNNNNNSSSGN. The stretch at 433–499 forms a coiled coil; sequence VLLAAKDKEI…NEALAEATAL (67 aa). Positions 503–515 are enriched in low complexity; sequence ASTNNNNNSQSSD. 2 disordered regions span residues 503 to 600 and 656 to 765; these read ASTN…KIKK and ASDA…NTNA. The span at 546-568 shows a compositional bias: acidic residues; it reads AEDDEEDEDQAMLVDSEEAEDKP. Positions 673–696 are enriched in basic residues; it reads QQQHQHQQQHHQQQHLHQQHHHHL. A compositionally biased stretch (low complexity) spans 697–710; it reads QQQPNSGSNSNPAS. Residues 714 to 735 show a composition bias toward basic residues; it reads HHGHHLHGHGLLHPSSAHHLHH. A compositionally biased stretch (low complexity) spans 738 to 765; sequence TESNSNSSTPTAAGNNNGSNNSSSNTNA. Positions 877–964 form a DNA-binding region, CUT 1; sequence NMDKYANQAL…VMLLKSLIPK (88 aa). 2 disordered regions span residues 1001-1083 and 1197-1289; these read LMKQ…HDDQ and QRSS…EFAA. Basic and acidic residues-rich tracts occupy residues 1009–1030 and 1062–1083; these read QHREQERRSHGGEDSHSNEDSK and QREREREQREREQQQRLRHDDQ. The stretch at 1056-1161 forms a coiled coil; it reads EQAAAQQRER…QQQAAQAQAQ (106 aa). The segment covering 1249–1282 has biased composition (low complexity); that stretch reads GAPPTAAPPTGGASSNSAAPSPLSNSILPPALSS. Residues 1330 to 1417 constitute a DNA-binding region (CUT 2); that stretch reads QQQFDMFNNL…VHKLVASQYK (88 aa). Residues 1463–1522 are a coiled coil; sequence AQAQHLMQQMQAAAMSAAMQQQQVAQAQQQAQQAQQAQQHLQQQAQQHLQQQQHLAQQQH. Positions 1507–1540 are enriched in low complexity; it reads AQQHLQQQQHLAQQQHPHQQHHQAAAAAAALHHQ. 6 disordered regions span residues 1507 to 1588, 1695 to 1747, 1803 to 1826, 1922 to 1955, 2069 to 2097, and 2113 to 2175; these read AQQH…PMLM, ERRE…PSKK, QVPHGPAGQDNPIPSRESTSATPF, RSDDYQDDLELEGGGHNLSDNESLEGQEPEDKTT, KQEEDDDEEQSGSVNLDNEDNATSEQKLK, and SSTG…GWNY. Gly residues predominate over residues 1564–1573; the sequence is AQPGGPGGNQ. The CUT 3 DNA-binding region spans 1608–1695; sequence YEMAALTQDL…VERLQLLKNE (88 aa). A compositionally biased stretch (low complexity) spans 1709 to 1732; the sequence is NQQDNSSDTSSNDTNDFYTSSPGP. A DNA-binding region (homeobox) is located at residues 1745-1804; it reads SKKQRVLFSEEQKEALRLAFALDPYPNVGTIEFLANELGLATRTITNWFHNHRMRLKQQV. Phosphoserine is present on residues serine 1940 and serine 1944. Positions 2126–2135 are enriched in pro residues; sequence PLAPPPPPPA. The span at 2136–2175 shows a compositional bias: low complexity; it reads ASSSIVSGESTTSSSSSSNTSSSTPAVTTAAATAAAGWNY.

Belongs to the CUT homeobox family. Detected in many cells in the central nervous system, all external sensory organs, some peripheral neurons, and in the non-neural cells of the spiracles and the Malpighian tubules.

It localises to the nucleus. Functionally, regulator of cell fate decisions in multiple lineages. Specifically, functions as a determination factor that specifies sensory organ identity in precursor cells. Probably also involved in cell type specification of Malpighian tubules. In absence of cut gene external sensory organs are transformed into chordotonal organs. This is Homeobox protein cut (ct) from Drosophila melanogaster (Fruit fly).